Reading from the N-terminus, the 414-residue chain is Serine hydroxymethyltransferase (414 aa).

Residues L116 and 120–122 (GHL) contribute to the (6S)-5,6,7,8-tetrahydrofolate site. K224 bears the N6-(pyridoxal phosphate)lysine mark. (6S)-5,6,7,8-tetrahydrofolate contacts are provided by residues E240 and 348–350 (SPF).

It belongs to the SHMT family. As to quaternary structure, homodimer. It depends on pyridoxal 5'-phosphate as a cofactor.

The protein localises to the cytoplasm. It catalyses the reaction (6R)-5,10-methylene-5,6,7,8-tetrahydrofolate + glycine + H2O = (6S)-5,6,7,8-tetrahydrofolate + L-serine. It participates in one-carbon metabolism; tetrahydrofolate interconversion. It functions in the pathway amino-acid biosynthesis; glycine biosynthesis; glycine from L-serine: step 1/1. Functionally, catalyzes the reversible interconversion of serine and glycine with tetrahydrofolate (THF) serving as the one-carbon carrier. This reaction serves as the major source of one-carbon groups required for the biosynthesis of purines, thymidylate, methionine, and other important biomolecules. Also exhibits THF-independent aldolase activity toward beta-hydroxyamino acids, producing glycine and aldehydes, via a retro-aldol mechanism. In Campylobacter jejuni (strain RM1221), this protein is Serine hydroxymethyltransferase.